The sequence spans 160 residues: Leptin (160 aa).

An N-terminal signal peptide occupies residues 1-17; the sequence is MDYTLALALSLLQLSMC. Cys109 and Cys160 are joined by a disulfide.

The protein belongs to the leptin family.

The protein localises to the secreted. Functionally, may function as part of a signaling pathway that acts to regulate the size of the body fat depot. The protein is Leptin (lep) of Tetraodon nigroviridis (Spotted green pufferfish).